Consider the following 190-residue polypeptide: Transcription factor bHLH162 (190 aa).

Polar residues predominate over residues 1–12; the sequence is MEPSHSNTGQSR. Residues 1–21 form a disordered region; it reads MEPSHSNTGQSRSVDRKTVEK. One can recognise a bHLH domain in the interval 11 to 63; the sequence is SRSVDRKTVEKNRRMQMKSLYSELISLLPHHSSTEPLTLPDQLDEAANYIKKL.

Belongs to the bHLH protein family.

The protein localises to the nucleus. The protein is Transcription factor bHLH162 of Arabidopsis thaliana (Mouse-ear cress).